Consider the following 124-residue polypeptide: Protein S100-A16 (124 aa).

The 15-residue stretch at 23-37 (VSKHSLVKNKISKSS) folds into the EF-hand 1; degenerate domain. The EF-hand 2 domain maps to 54–89 (GNRKAADKLIQNLDANHDGRICFDEYWTMIGGITSP). Ca(2+) contacts are provided by Asp-67, Asn-69, Asp-71, Arg-73, and Glu-78. A disordered region spans residues 97–124 (QECQQESQQECQQESQQESQQESQQGSS).

Belongs to the S-100 family. Homodimer. Interacts with TP53. As to expression, ubiquitous. Widely distributed throughout the adult brain and predominantly expressed within specific astrocyte populations. Expressed at high level in adipose tissues of obese animals.

It is found in the nucleus. Its subcellular location is the nucleolus. It localises to the cytoplasm. Calcium-binding protein. Binds one calcium ion per monomer. Can promote differentiation of adipocytes (in vitro). Overexpression in 3T3-L1 preadipocytes increases their proliferation, enhances adipogenesis and reduces insulin-stimulated glucose uptake. The protein is Protein S100-A16 of Mus musculus (Mouse).